A 668-amino-acid chain; its full sequence is MCSTCANVLKYYDWDPHIKLVINPNKFLHVGFCDNPLMCCYPELLPEFGTMWDCDQSPLQVYLESILGDDEWSSTHEAIDPVVPPMHWDEAGKIFQPHPGVLMHHLICKVAEGWDPNLPLFRLEADDGSITTPEQGTMVGGVIAEPNAQMSTAADMATGKSVDSEWEAFFSFHTSVNWSTSETQGKILFKQSLGPLLNPYLTHLAKLYVAWSGSVDVRFSISGSGVFGGKLAAIVVPPGIDPVQSTSMLQYPHVLFDARQVEPVIFSIPDLRSTLYHLMSDTDTTSLVIMVYNDLINPYANDSNSSGCIVTVETKPGPDFKFHLLKPPGSMLTHGSIPSDLIPKSSSLWIGNRFWSDITDFVIRPFVFQANRHFDFNQETAGWSTPRFRPITITISVKESAKLGIGVATDYIVPGIPDGWPDTTIPGELVPVGDYAITNGTNNDITTAAQYDAATEIRNNTNFRGMYICGSLQRAWGDKKISNTAFITTGTVDGAKLIPSNTIDQTKIAVFQDTHANKHVQTSDDTLALLGYTGIGEEAIGADRDRVVRISVLPERGARGGNHPIFHKNSIKLGYVIRSIDVFNSQILHTSRQLSLNHYLLSPDSFAVYRIIDSNGSWFDIGIDNDGFSFVGVSSIGKLEFPLTASYMGIQLAKIRLASNIRSVMTKL.

The protein belongs to the caliciviridae capsid protein family. In terms of assembly, homodimer. Homomultimer. Interacts with the minor capsid protein VP2. May bind to VP3 and Vpg proteins. Binds to alpha-2,6-linked sialic acid at surface of target cells. Interacts with host F11R/JAM-1/JAM-A; this interaction allows viral binding and entry into the host cell. As to quaternary structure, homooligomer; probably disulfide-linked. Post-translationally, cleaved by the viral protease to produce mature capsid protein. Cleaved by host caspase-2 and caspase-6 to generate protein p40, this might be linked to the cytopathic effect of the capsid leader protein.

The protein localises to the virion. The protein resides in the host cytoplasm. Capsid protein self assembles to form an icosahedral capsid with a T=3 symmetry, about 38 nm in diameter, and consisting of 180 capsid proteins. A smaller form of capsid with a diameter of 23 nm might be capsid proteins assembled as icosahedron with T=1 symmetry. The capsid encapsulates the genomic RNA and is decorated with VP2 proteins. Attaches virion to target cells by binding to feline junctional adhesion molecule A (F11R) and/or to alpha-2,6-linked sialic acid. Once attached, the virion is endocytosed. Acidification of the endosome induces conformational change of capsid protein thereby injecting virus genomic RNA into host cytoplasm. Its function is as follows. May function as a viroporin. The chain is Capsid protein VP1 from Felidae (cat family).